The primary structure comprises 261 residues: MAGLSFDNYQRNNFLAENSHTQPKATSTGTTIVGVKFNNGVVIAADTRSTQGPIVADKNCAKLHRISPKIWCAGAGTAADTEAVTQLIGSNIELHSLYTSREPRVVSALQMLKQHLFKYQGHIGAYLIVAGVDPTGSHLFSIHAHGSTDVGYYLSLGSGSLAAMAVLESHWKQDLTKEEAIKLASDAIQAGIWNDLGSGSNVDVCVMEIGKDAEYLRNYLTPNVREEKQKSYKFPRGTTAVLKESIVNICDIQEEQVDITA.

Positions 1 to 29 are cleaved as a propeptide — removed in mature form; the sequence is MAGLSFDNYQRNNFLAENSHTQPKATSTG. Residue T30 is the Nucleophile of the active site.

It belongs to the peptidase T1B family. As to quaternary structure, the 26S proteasome consists of a 20S proteasome core and two 19S regulatory subunits. The 20S proteasome core is composed of 28 subunits that are arranged in four stacked rings, resulting in a barrel-shaped structure. The two end rings are each formed by seven alpha subunits, and the two central rings are each formed by seven beta subunits. The catalytic chamber with the active sites is on the inside of the barrel.

The protein resides in the cytoplasm. Its subcellular location is the nucleus. The enzyme catalyses Cleavage of peptide bonds with very broad specificity.. In terms of biological role, the proteasome degrades poly-ubiquitinated proteins in the cytoplasm and in the nucleus. It is essential for the regulated turnover of proteins and for the removal of misfolded proteins. The proteasome is a multicatalytic proteinase complex that is characterized by its ability to cleave peptides with Arg, Phe, Tyr, Leu, and Glu adjacent to the leaving group at neutral or slightly basic pH. It has an ATP-dependent proteolytic activity. This chain is Proteasome subunit beta type-2 (PUP1), found in Saccharomyces cerevisiae (strain ATCC 204508 / S288c) (Baker's yeast).